Here is a 196-residue protein sequence, read N- to C-terminus: Peptidyl-tRNA hydrolase (196 aa).

Position 18 (Tyr-18) interacts with tRNA. His-23 (proton acceptor) is an active-site residue. 3 residues coordinate tRNA: Phe-69, Asn-71, and Asn-117.

It belongs to the PTH family. In terms of assembly, monomer.

The protein localises to the cytoplasm. The enzyme catalyses an N-acyl-L-alpha-aminoacyl-tRNA + H2O = an N-acyl-L-amino acid + a tRNA + H(+). Functionally, hydrolyzes ribosome-free peptidyl-tRNAs (with 1 or more amino acids incorporated), which drop off the ribosome during protein synthesis, or as a result of ribosome stalling. Catalyzes the release of premature peptidyl moieties from peptidyl-tRNA molecules trapped in stalled 50S ribosomal subunits, and thus maintains levels of free tRNAs and 50S ribosomes. The sequence is that of Peptidyl-tRNA hydrolase from Marinobacter nauticus (strain ATCC 700491 / DSM 11845 / VT8) (Marinobacter aquaeolei).